The sequence spans 237 residues: Large ribosomal subunit protein uL1 (237 aa).

It belongs to the universal ribosomal protein uL1 family. In terms of assembly, part of the 50S ribosomal subunit.

In terms of biological role, binds directly to 23S rRNA. The L1 stalk is quite mobile in the ribosome, and is involved in E site tRNA release. Functionally, protein L1 is also a translational repressor protein, it controls the translation of the L11 operon by binding to its mRNA. The chain is Large ribosomal subunit protein uL1 from Rickettsia typhi (strain ATCC VR-144 / Wilmington).